Reading from the N-terminus, the 302-residue chain is Glutamate/aspartate import solute-binding protein (302 aa).

The signal sequence occupies residues 1–22 (MQLRKLTTAMLVMGLSAGLAHA).

It belongs to the bacterial solute-binding protein 3 family. As to quaternary structure, the complex is composed of two ATP-binding proteins (GltL), two transmembrane proteins (GltJ and GltK) and a solute-binding protein (GltI).

The protein resides in the periplasm. In terms of biological role, part of the ABC transporter complex GltIJKL involved in glutamate and aspartate uptake. Binds to both glutamate and aspartate. The sequence is that of Glutamate/aspartate import solute-binding protein (gltI) from Salmonella typhimurium (strain LT2 / SGSC1412 / ATCC 700720).